The sequence spans 490 residues: Aspartyl/glutamyl-tRNA(Asn/Gln) amidotransferase subunit B (490 aa).

The protein belongs to the GatB/GatE family. GatB subfamily. In terms of assembly, heterotrimer of A, B and C subunits.

It carries out the reaction L-glutamyl-tRNA(Gln) + L-glutamine + ATP + H2O = L-glutaminyl-tRNA(Gln) + L-glutamate + ADP + phosphate + H(+). It catalyses the reaction L-aspartyl-tRNA(Asn) + L-glutamine + ATP + H2O = L-asparaginyl-tRNA(Asn) + L-glutamate + ADP + phosphate + 2 H(+). In terms of biological role, allows the formation of correctly charged Asn-tRNA(Asn) or Gln-tRNA(Gln) through the transamidation of misacylated Asp-tRNA(Asn) or Glu-tRNA(Gln) in organisms which lack either or both of asparaginyl-tRNA or glutaminyl-tRNA synthetases. The reaction takes place in the presence of glutamine and ATP through an activated phospho-Asp-tRNA(Asn) or phospho-Glu-tRNA(Gln). The polypeptide is Aspartyl/glutamyl-tRNA(Asn/Gln) amidotransferase subunit B (Burkholderia thailandensis (strain ATCC 700388 / DSM 13276 / CCUG 48851 / CIP 106301 / E264)).